The sequence spans 75 residues: Protein Tlp homolog (75 aa).

Residues 48–75 (KNQRRREALDGMREEIKDEARDKKNGYM) form a disordered region.

It belongs to the Tlp family.

In Clostridium botulinum (strain 657 / Type Ba4), this protein is Protein Tlp homolog.